Reading from the N-terminus, the 1413-residue chain is DNA-directed RNA polymerase subunit beta' (1413 aa).

Zn(2+) contacts are provided by C72, C74, C87, and C90. Mg(2+) is bound by residues D463, D465, and D467. The Zn(2+) site is built by C811, C885, C892, and C895.

This sequence belongs to the RNA polymerase beta' chain family. In terms of assembly, the RNAP catalytic core consists of 2 alpha, 1 beta, 1 beta' and 1 omega subunit. When a sigma factor is associated with the core the holoenzyme is formed, which can initiate transcription. Requires Mg(2+) as cofactor. Zn(2+) serves as cofactor.

The enzyme catalyses RNA(n) + a ribonucleoside 5'-triphosphate = RNA(n+1) + diphosphate. In terms of biological role, DNA-dependent RNA polymerase catalyzes the transcription of DNA into RNA using the four ribonucleoside triphosphates as substrates. The polypeptide is DNA-directed RNA polymerase subunit beta' (Ruegeria pomeroyi (strain ATCC 700808 / DSM 15171 / DSS-3) (Silicibacter pomeroyi)).